The primary structure comprises 609 residues: Nuclear factor 7, brain (609 aa).

In terms of domain architecture, Tudor-knot spans 21–75 (NVGSTYPCKRSDGSQHDAEIVKVRYNKQAGREEYYAHYVGLNRRQNEWVDKSRLV). Positions 74–84 (LVLTKPPKEGE) are enriched in basic and acidic residues. The disordered stretch occupies residues 74–129 (LVLTKPPKEGETNGTDQEVTDTAEQPDSKTPQKRKIEEPEPEPKKAKVEEKDASKN). Positions 85–102 (TNGTDQEVTDTAEQPDSK) are enriched in polar residues. A Phosphothreonine; by CDK1 modification is found at T103. Basic and acidic residues predominate over residues 107–127 (RKIEEPEPEPKKAKVEEKDAS). The segment at 145–185 (CPLCVELFKDPVMVACGHNFCRSCIDKAWEGQSSFACPECR) adopts an RING-type zinc-finger fold. The segment at 219 to 260 (RPLEKCSEHDERLKLYCKDDGTLSCVICRDSLKHASHNFLPI) adopts a B box-type zinc-finger fold. Positions 224, 227, 246, and 252 each coordinate Zn(2+). Positions 278–371 (LEASLKVTEQ…SLAKERMEDT (94 aa)) form a coiled coil. Positions 413 to 609 (GPIQYIMWKE…VDPLRFVHNK (197 aa)) constitute a B30.2/SPRY domain.

As to quaternary structure, monomer. Threonine (predominantly) and serine residues are phosphorylated during oocyte maturation, when CDK1 is active. In terms of tissue distribution, at the neurula stage, high expression in dorsal embryo region including neural folds and somites. Also high expression in adult brain (CNS) and low expression in oocytes.

Its subcellular location is the nucleus. Transcription factor that determines dorsal-ventral body axis. In Xenopus laevis (African clawed frog), this protein is Nuclear factor 7, brain.